The primary structure comprises 459 residues: Ribulose bisphosphate carboxylase (459 aa).

Residue Asn-111 coordinates substrate. Lys-166 serves as the catalytic Proton acceptor. Residue Lys-168 participates in substrate binding. The Mg(2+) site is built by Lys-191, Asp-193, and Glu-194. Lys-191 carries the post-translational modification N6-carboxylysine. The active-site Proton acceptor is the His-287. Substrate is bound by residues Arg-288, His-321, and Ser-368.

This sequence belongs to the RuBisCO large chain family. Type II subfamily. As to quaternary structure, homodimer. Mg(2+) is required as a cofactor.

The enzyme catalyses 2 (2R)-3-phosphoglycerate + 2 H(+) = D-ribulose 1,5-bisphosphate + CO2 + H2O. It catalyses the reaction D-ribulose 1,5-bisphosphate + O2 = 2-phosphoglycolate + (2R)-3-phosphoglycerate + 2 H(+). In terms of biological role, ruBisCO catalyzes two reactions: the carboxylation of D-ribulose 1,5-bisphosphate, the primary event in carbon dioxide fixation, as well as the oxidative fragmentation of the pentose substrate. Both reactions occur simultaneously and in competition at the same active site. This Cereibacter sphaeroides (Rhodobacter sphaeroides) protein is Ribulose bisphosphate carboxylase.